The chain runs to 574 residues: M-phase inducer phosphatase 2 (574 aa).

Disordered stretches follow at residues 31-51 (GFGFGSDGLLGSPERAASSSP) and 90-110 (RRTSECSLSSESSESSDAGLC). Serine 42 is modified (phosphoserine). The segment covering 90–105 (RRTSECSLSSESSESS) has biased composition (low complexity). At serine 166 the chain carries Phosphoserine; by MELK. Serine 246 bears the Phosphoserine mark. Phosphoserine; by MAPKAPK2 and MELK is present on serine 319. The residue at position 319 (serine 319) is a Phosphoserine; by MELK and MAPK14. A disordered region spans residues 339-359 (DVPVLSKRRKSGTPLEEQQLE). Serine 349 is modified (phosphoserine; by AURKA). Phosphoserine; by BRSK1 and MAPK14 is present on serine 370. A Rhodanese domain is found at 425-532 (IVEKFVIVDC…FFPQHPNFCE (108 aa)). Cysteine 481 is an active-site residue. At serine 557 the chain carries Phosphoserine.

It belongs to the MPI phosphatase family. As to quaternary structure, interacts with MAPK14 and 14-3-3 proteins. In terms of processing, phosphorylated by BRSK1 in vitro. Phosphorylated by CHEK1, which inhibits the activity of this protein. Phosphorylation at Ser-349 by AURKA might locally participate in the control of the onset of mitosis. Phosphorylation by MELK at Ser-166 promotes localization to the centrosome and the spindle poles during mitosis. Phosphorylation at Ser-319 and Ser-370 by MAPK14 is required for binding to 14-3-3 proteins.

It is found in the cytoplasm. The protein resides in the cytoskeleton. Its subcellular location is the microtubule organizing center. The protein localises to the centrosome. It localises to the spindle pole. It catalyses the reaction O-phospho-L-tyrosyl-[protein] + H2O = L-tyrosyl-[protein] + phosphate. With respect to regulation, stimulated by B-type cyclins. Functionally, tyrosine protein phosphatase which functions as a dosage-dependent inducer of mitotic progression. Directly dephosphorylates CDK1 and stimulates its kinase activity. Required for G2/M phases of the cell cycle progression and abscission during cytokinesis in a ECT2-dependent manner. The three isoforms seem to have a different level of activity. The sequence is that of M-phase inducer phosphatase 2 (Cdc25b) from Rattus norvegicus (Rat).